The sequence spans 273 residues: Large ribosomal subunit protein uL2 (273 aa).

The segment at 222–273 is disordered; the sequence is GMAMNPVDHPHGGGEGRNKGIQPVSPWGTPAKGYRTRSNKRTDKYIVRRRNK. A compositionally biased stretch (basic and acidic residues) spans 229-239; sequence DHPHGGGEGRN.

This sequence belongs to the universal ribosomal protein uL2 family. As to quaternary structure, part of the 50S ribosomal subunit. Forms a bridge to the 30S subunit in the 70S ribosome.

One of the primary rRNA binding proteins. Required for association of the 30S and 50S subunits to form the 70S ribosome, for tRNA binding and peptide bond formation. It has been suggested to have peptidyltransferase activity; this is somewhat controversial. Makes several contacts with the 16S rRNA in the 70S ribosome. The sequence is that of Large ribosomal subunit protein uL2 from Tolumonas auensis (strain DSM 9187 / NBRC 110442 / TA 4).